The chain runs to 551 residues: Nose resistant to fluoxetine protein 5 (551 aa).

Positions 1-20 (MSRNFHIFFLLVSIIQVGNS) are cleaved as a signal peptide. An intrachain disulfide couples cysteine 151 to cysteine 232. A disordered region spans residues 241–265 (EDSEQEEGNVETTVAPTPDDDNSTL).

This sequence belongs to the BPI/LBP/Plunc superfamily. BPI/LBP family. As to quaternary structure, interacts with ttr-52. Expressed in the body wall muscle cells and detected at the basal surface of pharyngeal cells and basal-lateral membranes of the intestine.

Its subcellular location is the secreted. Its function is as follows. Plays a role in the uptake of a range of molecules including phosphatidylserine, lipids and xenobiotic compounds from the intestine to surrounding tissues. Possesses lipid transfer activity. Mediates transport of lipids from intestine to reproductive tract. Binds phosphatidylserine. Plays a role in efficient clearance of cell corpses by mediating phosphatidylserine appearance on phagocytic cells, thus promoting phagocytic engulfment of apoptotic cells. Vital for embryonic development. This is Nose resistant to fluoxetine protein 5 from Caenorhabditis elegans.